Consider the following 1260-residue polypeptide: ATP-dependent helicase/deoxyribonuclease subunit B (1260 aa).

Belongs to the helicase family. AddB/RexB type 2 subfamily. As to quaternary structure, heterodimer of AddA and RexB. Requires Mg(2+) as cofactor.

Its function is as follows. The heterodimer acts as both an ATP-dependent DNA helicase and an ATP-dependent, dual-direction single-stranded exonuclease. Recognizes the chi site generating a DNA molecule suitable for the initiation of homologous recombination. This subunit has 5' -&gt; 3' nuclease activity but not helicase activity. The polypeptide is ATP-dependent helicase/deoxyribonuclease subunit B (Limosilactobacillus reuteri (strain DSM 20016) (Lactobacillus reuteri)).